A 513-amino-acid chain; its full sequence is U3 small nucleolar RNA-associated protein 15 (513 aa).

WD repeat units follow at residues 37–78 (KEHN…KTFS), 79–118 (RFKD…TILL), 124–162 (THPT…EPQL), 166–206 (GATD…STPI), 210–247 (NHDQ…KLYE), and 250–294 (NFNK…QVKF). The disordered stretch occupies residues 332–354 (KKKEKRSSDKENAPASFNKNAKS).

In terms of assembly, interacts with snoRNA U3. Interacts with MPP10. Component of the ribosomal small subunit (SSU) processome composed of at least 40 protein subunits and snoRNA U3. In the absence of snoRNA3, forms a complex with other t-UTPs. This complex can associate with pre-18S ribosomal RNAs.

It is found in the nucleus. Its subcellular location is the nucleolus. In terms of biological role, involved in nucleolar processing of pre-18S ribosomal RNA. Required for optimal pre-ribosomal RNA transcription by RNA polymerase I together with a subset of U3 proteins required for transcription (t-UTPs). This Saccharomyces cerevisiae (strain ATCC 204508 / S288c) (Baker's yeast) protein is U3 small nucleolar RNA-associated protein 15 (UTP15).